The primary structure comprises 155 residues: uncharacterized protein (155 aa).

Disordered regions lie at residues 1-22 (MSSQ…TFTF) and 108-155 (PFNK…DTQA). Ser-2 carries the post-translational modification N-acetylserine. Residues Ser-136, Ser-144, and Ser-146 each carry the phosphoserine modification. Residues 136-155 (SDEDLDAESDSEGEDEDTQA) are compositionally biased toward acidic residues.

This is an uncharacterized protein from Rattus norvegicus (Rat).